The sequence spans 316 residues: Transaldolase (316 aa).

The Schiff-base intermediate with substrate role is filled by Lys-131.

This sequence belongs to the transaldolase family. Type 1 subfamily. As to quaternary structure, homodimer.

Its subcellular location is the cytoplasm. The enzyme catalyses D-sedoheptulose 7-phosphate + D-glyceraldehyde 3-phosphate = D-erythrose 4-phosphate + beta-D-fructose 6-phosphate. The protein operates within carbohydrate degradation; pentose phosphate pathway; D-glyceraldehyde 3-phosphate and beta-D-fructose 6-phosphate from D-ribose 5-phosphate and D-xylulose 5-phosphate (non-oxidative stage): step 2/3. Its function is as follows. Transaldolase is important for the balance of metabolites in the pentose-phosphate pathway. This Buchnera aphidicola subsp. Acyrthosiphon pisum (strain 5A) protein is Transaldolase.